Consider the following 673-residue polypeptide: Putative lipase atg15 (673 aa).

Residues 1–7 (MPRKRSR) lie on the Cytoplasmic side of the membrane. A helical; Signal-anchor for type II membrane protein transmembrane segment spans residues 8–28 (FELSIHSLLLSVAVLSGAAYA). Residues 29–673 (SGYYPPSQQV…AVTSAPTPTS (645 aa)) are Lumenal-facing. 5 N-linked (GlcNAc...) asparagine glycosylation sites follow: Asn156, Asn191, Asn213, Asn271, and Asn295. The active-site Charge relay system is Ser311. Asn457 is a glycosylation site (N-linked (GlcNAc...) asparagine).

The protein belongs to the AB hydrolase superfamily. Lipase family. Binds to both phosphatidylinositol (PI) and phosphatidylinositol 3,5-bisphosphate (PIP2).

It is found in the endosome. Its subcellular location is the multivesicular body membrane. The protein resides in the prevacuolar compartment membrane. The catalysed reaction is a triacylglycerol + H2O = a diacylglycerol + a fatty acid + H(+). Functionally, lipase which is essential for lysis of subvacuolar cytoplasm to vacuole targeted bodies and intravacuolar autophagic bodies. Involved in the lysis of intravacuolar multivesicular body (MVB) vesicles. The intravacuolar membrane disintegration by atg15 is critical to life span extension. This chain is Putative lipase atg15 (atg15), found in Penicillium rubens (strain ATCC 28089 / DSM 1075 / NRRL 1951 / Wisconsin 54-1255) (Penicillium chrysogenum).